Consider the following 519-residue polypeptide: Aldehyde dehydrogenase X, mitochondrial (519 aa).

Residues 1–19 (MLTARLLLPRLLCLQGRTT) constitute a mitochondrion transit peptide. Lys53 is subject to N6-acetyllysine. Lys54 carries the post-translational modification N6-acetyllysine; alternate. An N6-succinyllysine; alternate modification is found at Lys54. Lys83 is modified (N6-succinyllysine). Position 264–269 (264–269 (GSTEVG)) interacts with NAD(+). The Proton acceptor role is filled by Glu287. The active-site Nucleophile is the Cys321. 5 positions are modified to N6-acetyllysine; alternate: Lys366, Lys385, Lys401, Lys416, and Lys428. Residues Lys366, Lys385, Lys401, Lys416, and Lys428 each carry the N6-succinyllysine; alternate modification. Position 431 is an N6-acetyllysine (Lys431).

This sequence belongs to the aldehyde dehydrogenase family. In terms of assembly, homotetramer.

The protein resides in the mitochondrion matrix. The catalysed reaction is an aldehyde + NAD(+) + H2O = a carboxylate + NADH + 2 H(+). Its pathway is alcohol metabolism; ethanol degradation; acetate from ethanol: step 2/2. Functionally, ALDHs play a major role in the detoxification of alcohol-derived acetaldehyde. They are involved in the metabolism of corticosteroids, biogenic amines, neurotransmitters, and lipid peroxidation. The chain is Aldehyde dehydrogenase X, mitochondrial (Aldh1b1) from Mus musculus (Mouse).